We begin with the raw amino-acid sequence, 329 residues long: Glycerol-3-phosphate dehydrogenase [NAD(P)+] (329 aa).

4 residues coordinate NADPH: Ser13, Trp14, His34, and Lys105. 3 residues coordinate sn-glycerol 3-phosphate: Lys105, Gly134, and Ser136. Ala138 contacts NADPH. Residues Lys189, Asp242, Ser252, Arg253, and Asn254 each contribute to the sn-glycerol 3-phosphate site. Lys189 (proton acceptor) is an active-site residue. Residue Arg253 coordinates NADPH. The NADPH site is built by Val277 and Glu279.

The protein belongs to the NAD-dependent glycerol-3-phosphate dehydrogenase family.

The protein localises to the cytoplasm. The catalysed reaction is sn-glycerol 3-phosphate + NAD(+) = dihydroxyacetone phosphate + NADH + H(+). The enzyme catalyses sn-glycerol 3-phosphate + NADP(+) = dihydroxyacetone phosphate + NADPH + H(+). Its pathway is membrane lipid metabolism; glycerophospholipid metabolism. Catalyzes the reduction of the glycolytic intermediate dihydroxyacetone phosphate (DHAP) to sn-glycerol 3-phosphate (G3P), the key precursor for phospholipid synthesis. The protein is Glycerol-3-phosphate dehydrogenase [NAD(P)+] of Legionella pneumophila subsp. pneumophila (strain Philadelphia 1 / ATCC 33152 / DSM 7513).